The primary structure comprises 109 residues: Cell division protein ZapA (109 aa).

Residues 22-99 (EQQDALNMAA…IEQALLEQGR (78 aa)) adopt a coiled-coil conformation.

This sequence belongs to the ZapA family. Type 1 subfamily. In terms of assembly, homodimer. Interacts with FtsZ.

Its subcellular location is the cytoplasm. Activator of cell division through the inhibition of FtsZ GTPase activity, therefore promoting FtsZ assembly into bundles of protofilaments necessary for the formation of the division Z ring. It is recruited early at mid-cell but it is not essential for cell division. The protein is Cell division protein ZapA of Yersinia enterocolitica serotype O:8 / biotype 1B (strain NCTC 13174 / 8081).